The chain runs to 325 residues: Germination protease (325 aa).

Positions 1 to 7 (MYNVRTD) are excised as a propeptide.

It belongs to the peptidase A25 family. Homotetramer. Post-translationally, autoproteolytically processed. The inactive tetrameric zymogen termed p46 autoprocesses to a smaller form termed p41, which is active only during spore germination.

The enzyme catalyses Endopeptidase action with P4 Glu or Asp, P1 preferably Glu &gt; Asp, P1' hydrophobic and P2' Ala.. Initiates the rapid degradation of small, acid-soluble proteins during spore germination. This Clostridium perfringens (strain SM101 / Type A) protein is Germination protease.